The following is a 411-amino-acid chain: Serine--tRNA ligase (411 aa).

226 to 228 (TSE) is an L-serine binding site. 257–259 (RKE) is a binding site for ATP. Glutamate 280 lines the L-serine pocket. 344-347 (EISS) lines the ATP pocket. Serine 379 lines the L-serine pocket.

This sequence belongs to the class-II aminoacyl-tRNA synthetase family. Type-1 seryl-tRNA synthetase subfamily. In terms of assembly, homodimer. The tRNA molecule binds across the dimer.

It is found in the cytoplasm. The enzyme catalyses tRNA(Ser) + L-serine + ATP = L-seryl-tRNA(Ser) + AMP + diphosphate + H(+). It carries out the reaction tRNA(Sec) + L-serine + ATP = L-seryl-tRNA(Sec) + AMP + diphosphate + H(+). It participates in aminoacyl-tRNA biosynthesis; selenocysteinyl-tRNA(Sec) biosynthesis; L-seryl-tRNA(Sec) from L-serine and tRNA(Sec): step 1/1. In terms of biological role, catalyzes the attachment of serine to tRNA(Ser). Is also able to aminoacylate tRNA(Sec) with serine, to form the misacylated tRNA L-seryl-tRNA(Sec), which will be further converted into selenocysteinyl-tRNA(Sec). This Campylobacter jejuni subsp. jejuni serotype O:6 (strain 81116 / NCTC 11828) protein is Serine--tRNA ligase.